Consider the following 312-residue polypeptide: HPr kinase/phosphorylase (312 aa).

Active-site residues include His139 and Lys160. 154-161 (GDSGIGKS) provides a ligand contact to ATP. Ser161 lines the Mg(2+) pocket. Catalysis depends on Asp178, which acts as the Proton acceptor; for phosphorylation activity. Proton donor; for dephosphorylation activity. Residues 202–211 (IEIRGVGIID) form an important for the catalytic mechanism of both phosphorylation and dephosphorylation region. Residue Glu203 participates in Mg(2+) binding. Residue Arg244 is part of the active site. Residues 265 to 270 (PVKTGR) form an important for the catalytic mechanism of dephosphorylation region.

Belongs to the HPrK/P family. In terms of assembly, homohexamer. Mg(2+) serves as cofactor.

The enzyme catalyses [HPr protein]-L-serine + ATP = [HPr protein]-O-phospho-L-serine + ADP + H(+). The catalysed reaction is [HPr protein]-O-phospho-L-serine + phosphate + H(+) = [HPr protein]-L-serine + diphosphate. Catalyzes the ATP- as well as the pyrophosphate-dependent phosphorylation of a specific serine residue in HPr, a phosphocarrier protein of the phosphoenolpyruvate-dependent sugar phosphotransferase system (PTS). HprK/P also catalyzes the pyrophosphate-producing, inorganic phosphate-dependent dephosphorylation (phosphorolysis) of seryl-phosphorylated HPr (P-Ser-HPr). The two antagonistic activities of HprK/P are regulated by several intracellular metabolites, which change their concentration in response to the absence or presence of rapidly metabolisable carbon sources (glucose, fructose, etc.) in the growth medium. Therefore, by controlling the phosphorylation state of HPr, HPrK/P is a sensor enzyme that plays a major role in the regulation of carbon metabolism and sugar transport: it mediates carbon catabolite repression (CCR), and regulates PTS-catalyzed carbohydrate uptake and inducer exclusion. This is HPr kinase/phosphorylase from Streptococcus pneumoniae serotype 4 (strain ATCC BAA-334 / TIGR4).